Consider the following 432-residue polypeptide: Probable protein phosphatase 2C 33 (432 aa).

Residues 27-298 (GGGSERPLVR…DDTTCVVVDI (272 aa)) enclose the PPM-type phosphatase domain. 4 residues coordinate Mn(2+): Asp-74, Gly-75, Asp-250, and Asp-289.

The protein belongs to the PP2C family. It depends on Mg(2+) as a cofactor. Mn(2+) is required as a cofactor.

The catalysed reaction is O-phospho-L-seryl-[protein] + H2O = L-seryl-[protein] + phosphate. The enzyme catalyses O-phospho-L-threonyl-[protein] + H2O = L-threonyl-[protein] + phosphate. The sequence is that of Probable protein phosphatase 2C 33 from Oryza sativa subsp. japonica (Rice).